A 1214-amino-acid chain; its full sequence is MYKSLLDKAGLGSITSVRFLGDQQSVFVSKDLLKPIQDVNSLRLSLTDNQTVSKEFQALIVKHLDESHLLQGDKNLVGSEVRIYSLDPSTQWFSATVVHGNPSSKTLQVNCEEIPALKIVDPALIHVEVVHDNFVTCGNSTRIGAVKRKSSENNGSSVSKQAKSCSEVSPSMCPVQSVPTTVCKEILLGCTAATPSSNRQQNTPQAANSPPNIGAKLPQGCHKQSLPEEISSCLNTKSEVLRTKPDVCKAGLLSSKSSQVGAGDLKILSEPKGSCIQPKTNTDQESRLESTPQPVTGLTKECLVTKTSSKAELDNATAPELQKRLEHTASTPDGLSDKPEVEAGVTRLNSCSEKKVGPSDLGSQSQNLKETSVKVDHDSCCTRSSNKTQTPPARKSVLTDPDKLKKLQQSGEAFVQDDSCVNIVAQLPKCRECRLDSLRKDKDQQKDSPVFCRFFHFRRLQFNKHGVLRVEGFLTPNKYDSEAIGLWLPLTKNVVGTDLDTAKYILANIGDHFCQMVISEKEAMSTIEPHRQVAWKRAVKGVREMCDVCDTTIFNLHWVCPRCGFGVCVDCYRLKRKNCQQGAAYKTFSWIRCVKSQIHEPENLMPTQIIPGKALYDVGDIVHSVRAKWGIKANCPCSNRQFKLFSKPALKEDLKQASLSGEKPSLGTMVQQSSPVLEPAAVCGEAPSKPASNVKPICPANTSPLNWLADLTSGNVNKENKEKQLTMPILKNEIKCLPPLPPLNKSSTVLHTFNSTILTPVSNNNSGFLRNLLNSSTGKTENGLKNTPKILDDIFASLVQNKTSSDLSKRPQGLTIKPSILGFDTPHYWLCDNRLLCLQDPNNKSNWNVFRECWKQGQPVMVSGVHHKLNTELWKPESFRKEFGEQEVDLVNCRTNEIITGATVGDFWDGFEDVPNRLKNEKEKEPMVLKLKDWPPGEDFRDMMPSRFDDLMANIPLPEYTRRDGKLNLASRLPNYFVRPDLGPKMYNAYGLITPEDRKYGTTNLHLDVSDAANVMVYVGIPKGQCEQEEEVLRTIQDGDSDELTIKRFIEGKEKPGALWHIYAAKDTEKIREFLKKVSEEQGQENPADHDPIHDQSWYLDRSLRKRLYQEYGVQGWAIVQFLGDVVFIPAGAPHQVHNLYSCIKVAEDFVSPEHVKHCFWLTQEFRHLSQTHTNHEDKLQVKNVIYHAVKDAVAMLKAVNPVWANVNSSAHWR.

A phosphoserine mark is found at S150 and S209. A compositionally biased stretch (polar residues) spans 194 to 211 (TPSSNRQQNTPQAANSPP). Disordered stretches follow at residues 194-215 (TPSSNRQQNTPQAANSPPNIGA), 271-293 (PKGSCIQPKTNTDQESRLESTPQ), and 310-398 (KAEL…KSVL). A Phosphoserine modification is found at S330. Residues 361-370 (LGSQSQNLKE) show a composition bias toward polar residues. A compositionally biased stretch (basic and acidic residues) spans 371–380 (TSVKVDHDSC). A compositionally biased stretch (polar residues) spans 381–391 (CTRSSNKTQTP). A C6-type zinc finger spans residues 546–571 (CDVCDTTIFNLHWVCPRCGFGVCVDC). The short motif at 769–773 (LRNLL) is the LXXLL motif element. K779 is modified (N6-acetyllysine). Residues 944–1167 (MPSRFDDLMA…HCFWLTQEFR (224 aa)) enclose the JmjC domain. The Fe cation site is built by H1006, D1008, and H1135.

It belongs to the JHDM2 histone demethylase family. As to quaternary structure, interacts with VRK1. The cofactor is Fe(2+). In terms of tissue distribution, testis specific. Expressed only in male germ cells.

It localises to the cytoplasm. Its subcellular location is the nucleus. The enzyme catalyses N(6),N(6)-dimethyl-L-lysyl(9)-[histone H3] + 2 2-oxoglutarate + 2 O2 = L-lysyl(9)-[histone H3] + 2 formaldehyde + 2 succinate + 2 CO2. Functionally, histone demethylase that specifically demethylates 'Lys-9' of histone H3, thereby playing a central role in histone code. Preferentially demethylates mono- and dimethylated H3 'Lys-9' residue, with a preference for dimethylated residue, while it has weak or no activity on trimethylated H3 'Lys-9'. Demethylation of Lys residue generates formaldehyde and succinate. Involved in hormone-dependent transcriptional activation, by participating in recruitment to androgen-receptor target genes, resulting in H3 'Lys-9' demethylation and transcriptional activation. Involved in spermatogenesis by regulating expression of target genes such as PRM1 and TNP1 which are required for packaging and condensation of sperm chromatin. Directly regulates expression of PPARA and UCP1 and is involved in obesity resistance. This is Lysine-specific demethylase 3A (Kdm3a) from Rattus norvegicus (Rat).